Here is a 443-residue protein sequence, read N- to C-terminus: Xaa-Pro dipeptidase (443 aa).

Residues aspartate 246, aspartate 257, histidine 339, glutamate 384, and glutamate 423 each coordinate Mn(2+).

The protein belongs to the peptidase M24B family. Bacterial-type prolidase subfamily. Mn(2+) serves as cofactor.

The catalysed reaction is Xaa-L-Pro dipeptide + H2O = an L-alpha-amino acid + L-proline. Splits dipeptides with a prolyl residue in the C-terminal position. This Escherichia coli (strain 55989 / EAEC) protein is Xaa-Pro dipeptidase.